Here is a 635-residue protein sequence, read N- to C-terminus: Biosynthetic arginine decarboxylase (635 aa).

Lys-100 bears the N6-(pyridoxal phosphate)lysine mark. A substrate-binding site is contributed by 282 to 292; it reads LDIGGGLGVDY.

This sequence belongs to the Orn/Lys/Arg decarboxylase class-II family. SpeA subfamily. It depends on Mg(2+) as a cofactor. Pyridoxal 5'-phosphate is required as a cofactor.

It carries out the reaction L-arginine + H(+) = agmatine + CO2. It functions in the pathway amine and polyamine biosynthesis; agmatine biosynthesis; agmatine from L-arginine: step 1/1. Functionally, catalyzes the biosynthesis of agmatine from arginine. This chain is Biosynthetic arginine decarboxylase, found in Geobacter sp. (strain M21).